The sequence spans 234 residues: UPF0173 metal-dependent hydrolase Smed_0942 (234 aa).

Belongs to the UPF0173 family.

In Sinorhizobium medicae (strain WSM419) (Ensifer medicae), this protein is UPF0173 metal-dependent hydrolase Smed_0942.